The following is a 130-amino-acid chain: Large ribosomal subunit protein uL14 (130 aa).

The protein belongs to the universal ribosomal protein uL14 family. As to quaternary structure, part of the 50S ribosomal subunit. Forms a cluster with proteins L3 and L19. In the 70S ribosome, L14 and L19 interact and together make contacts with the 16S rRNA in bridges B5 and B8.

In terms of biological role, binds to 23S rRNA. Forms part of two intersubunit bridges in the 70S ribosome. In Helicobacter pylori (strain P12), this protein is Large ribosomal subunit protein uL14.